Consider the following 231-residue polypeptide: Large ribosomal subunit protein uL1 (231 aa).

It belongs to the universal ribosomal protein uL1 family. Part of the 50S ribosomal subunit.

Functionally, binds directly to 23S rRNA. The L1 stalk is quite mobile in the ribosome, and is involved in E site tRNA release. Protein L1 is also a translational repressor protein, it controls the translation of the L11 operon by binding to its mRNA. The protein is Large ribosomal subunit protein uL1 of Staphylococcus carnosus (strain TM300).